A 181-amino-acid chain; its full sequence is Large ribosomal subunit protein uL5 (181 aa).

This sequence belongs to the universal ribosomal protein uL5 family. In terms of assembly, part of the 50S ribosomal subunit; contacts the 5S rRNA and probably tRNA. Forms a bridge to the 30S subunit in the 70S ribosome.

In terms of biological role, this is one of the proteins that bind and probably mediate the attachment of the 5S RNA into the large ribosomal subunit, where it forms part of the central protuberance. In the 70S ribosome it contacts protein S13 of the 30S subunit (bridge B1b), connecting the 2 subunits; this bridge is implicated in subunit movement. May contact the P site tRNA; the 5S rRNA and some of its associated proteins might help stabilize positioning of ribosome-bound tRNAs. The chain is Large ribosomal subunit protein uL5 from Methanococcus maripaludis (strain C7 / ATCC BAA-1331).